The chain runs to 69 residues: uncharacterized protein (69 aa).

Residues 1–16 form the signal peptide; sequence MSLGLIFALLLTHAAA.

This is an uncharacterized protein from Archaeoglobus fulgidus (strain ATCC 49558 / DSM 4304 / JCM 9628 / NBRC 100126 / VC-16).